The primary structure comprises 893 residues: Protein bride of sevenless (893 aa).

Positions 1–30 (MSGLQLIWKSPTQLVLFVLLITISCIDLCH) are cleaved as a signal peptide. Residues 32-530 (VGAATPTKKS…RIKLDTWVAT (499 aa)) lie on the Extracellular side of the membrane. Disordered stretches follow at residues 36-66 (TPTK…NEGS) and 82-102 (GTAS…SSTT). A compositionally biased stretch (polar residues) spans 50-66 (QPVSSTTTAIPTTNEGS). Asparagine 183, asparagine 307, asparagine 328, asparagine 471, and asparagine 482 each carry an N-linked (GlcNAc...) asparagine glycan. A run of 8 helical transmembrane segments spans residues 531–551 (GLTA…FIVV), 563–583 (PVTS…FVPF), 607–627 (LCGV…SLLL), 630–650 (AVML…NGYI), 653–673 (IICV…LVVM), 692–712 (WGLL…VPFI), 722–742 (GILI…WIAL), and 752–772 (AAIP…ILIP). The Cytoplasmic segment spans residues 773–893 (RTFLIVRGIE…SPDHSKITRF (121 aa)). The disordered stretch occupies residues 858 to 893 (ANINPQRPPPHPQQSPSRSSVCSLPPSPDHSKITRF).

This sequence belongs to the G-protein coupled receptor 3 family.

It localises to the cell membrane. Acts as a ligand for sevenless tyrosine-kinase receptor during eye development. The sequence is that of Protein bride of sevenless (boss) from Drosophila virilis (Fruit fly).